We begin with the raw amino-acid sequence, 302 residues long: MSVFIDKNTKVMVQGITGSTALFHTKQMLDYGTQIVAGVTPGKGGQVVEGVPVYNTVEEAKNETGANVSVVYVPAPFAADSIIEAADADLDMVICITEHIPVVDMVKVKRYLQGRKTRLVGPNCPGVITADECKIGIMPGYIHKKGHVGVVSRSGTLTYEAVHQLTEEGIGQTTAVGIGGDPVNGTNFIDVLKAFNEDSETKAVVMIGEIGGTAEEEAAQWIKENMNKPVIGFIGGQTAPPGKRMGHAGAIISGGKGTASEKIKTLNDCGVETADTPSEIGTTLIDAAKKAGIYEELLTIKK.

CoA is bound by residues 17–20, lysine 43, and 96–98; these read TGST and ITE. Tyrosine 159 contributes to the substrate binding site. Histidine 247 serves as the catalytic Tele-phosphohistidine intermediate.

It belongs to the succinate/malate CoA ligase alpha subunit family. In terms of assembly, heterotetramer of two alpha and two beta subunits.

It catalyses the reaction succinate + ATP + CoA = succinyl-CoA + ADP + phosphate. The enzyme catalyses GTP + succinate + CoA = succinyl-CoA + GDP + phosphate. It functions in the pathway carbohydrate metabolism; tricarboxylic acid cycle; succinate from succinyl-CoA (ligase route): step 1/1. Functionally, succinyl-CoA synthetase functions in the citric acid cycle (TCA), coupling the hydrolysis of succinyl-CoA to the synthesis of either ATP or GTP and thus represents the only step of substrate-level phosphorylation in the TCA. The alpha subunit of the enzyme binds the substrates coenzyme A and phosphate, while succinate binding and nucleotide specificity is provided by the beta subunit. The polypeptide is Succinate--CoA ligase [ADP-forming] subunit alpha (Staphylococcus epidermidis (strain ATCC 12228 / FDA PCI 1200)).